A 429-amino-acid polypeptide reads, in one-letter code: Serine hydroxymethyltransferase (429 aa).

Residues Leu126 and 130 to 132 (GHL) contribute to the (6S)-5,6,7,8-tetrahydrofolate site. At Lys235 the chain carries N6-(pyridoxal phosphate)lysine. 359–361 (SPF) lines the (6S)-5,6,7,8-tetrahydrofolate pocket.

This sequence belongs to the SHMT family. In terms of assembly, homodimer. Pyridoxal 5'-phosphate serves as cofactor.

It localises to the cytoplasm. The enzyme catalyses (6R)-5,10-methylene-5,6,7,8-tetrahydrofolate + glycine + H2O = (6S)-5,6,7,8-tetrahydrofolate + L-serine. The protein operates within one-carbon metabolism; tetrahydrofolate interconversion. Its pathway is amino-acid biosynthesis; glycine biosynthesis; glycine from L-serine: step 1/1. In terms of biological role, catalyzes the reversible interconversion of serine and glycine with tetrahydrofolate (THF) serving as the one-carbon carrier. This reaction serves as the major source of one-carbon groups required for the biosynthesis of purines, thymidylate, methionine, and other important biomolecules. Also exhibits THF-independent aldolase activity toward beta-hydroxyamino acids, producing glycine and aldehydes, via a retro-aldol mechanism. The sequence is that of Serine hydroxymethyltransferase from Synechococcus sp. (strain CC9902).